The chain runs to 479 residues: MAALEKMTFPKKMTFPEKPSHKKYRAALKKEKRKKRRQELARLRDSGLSQEEEEDTFIEEQQLEEEKLLERERERLHEEWLLREQKAQEEFRIKKEKEEAAKKWLEEQERKLKEQWKEQQRKEREEEEQKQQEKKEKEEAVQKMLDQAENDLENSTTWQNPEPPVDFRVMEKDRANCPFYSKTGACRFGDRCSRKHNFPTSSPTLLIKSMFTTFGMEQCRRDDYDPDASLEYSEEETYQQFLDFYEDVLPEFKNVGKVIQFKVSCNLEPHLRGNVYVQYQSEEECQAALSLFNGRWYAGRQLQCEFCPVTRWKMAICGLFEIQQCPRGKHCNFLHVFRNPNNEFWEANRDIYLSSDQTGSSFGKNSERREKMGHHDHYYSRQRGRRNPSPDHTYKRNGESERKKSSHRGKKSHKRTSKSRERHNSPSRGRNRHRSWDQGRRSQSRRSHRSRSQSSSRCRSRGRRKSGNRDRTVQSPQSK.

The disordered stretch occupies residues 1 to 63; sequence MAALEKMTFP…EDTFIEEQQL (63 aa). The span at 20–37 shows a compositional bias: basic residues; that stretch reads SHKKYRAALKKEKRKKRR. Residues 50-63 are compositionally biased toward acidic residues; sequence QEEEEDTFIEEQQL. Residue K67 forms a Glycyl lysine isopeptide (Lys-Gly) (interchain with G-Cter in SUMO2) linkage. The C3H1-type 1 zinc finger occupies 171–199; it reads EKDRANCPFYSKTGACRFGDRCSRKHNFP. An RRM domain is found at 203–309; the sequence is PTLLIKSMFT…RQLQCEFCPV (107 aa). Residues 311–338 form a C3H1-type 2 zinc finger; the sequence is RWKMAICGLFEIQQCPRGKHCNFLHVFR. Position 354 is a phosphoserine (S354). Residues 356-479 form a disordered region; that stretch reads DQTGSSFGKN…DRTVQSPQSK (124 aa). Composition is skewed to basic and acidic residues over residues 365 to 379 and 388 to 403; these read NSERREKMGHHDHYY and PSPDHTYKRNGESERK. Position 389 is a phosphoserine (S389). Composition is skewed to basic residues over residues 404–417 and 442–451; these read KSSHRGKKSHKRTS and SQSRRSHRSR.

It is found in the nucleus. This Homo sapiens (Human) protein is U2 small nuclear ribonucleoprotein auxiliary factor 35 kDa subunit-related protein 1.